We begin with the raw amino-acid sequence, 1228 residues long: Myosin-1 (1228 aa).

Residues 1–27 (MAVTKRAGRRAQGGTQPAKGAQGVKKA) are disordered. Residues 37-716 (VGVSDLTLLS…TLFALEHMRD (680 aa)) enclose the Myosin motor domain. Position 130-137 (130-137 (GESGAGKT)) interacts with ATP. Ser-358 carries the post-translational modification Phosphoserine. An actin-binding region spans residues 405 to 487 (TIGILDIYGF…PGIFAALNDA (83 aa)). IQ domains are found at residues 720-740 (HNMA…KTEC) and 741-768 (AIKI…SGHK). The region spanning 776–962 (RRTYSLIGYR…SGSVQVPPGA (187 aa)) is the TH1 domain. 3 disordered regions span residues 953–1040 (SGSV…AESA), 1053–1109 (QSLV…PAAP), and 1169–1228 (QGGA…DDDW). Over residues 1053–1063 (QSLVNPRSGQG) the composition is skewed to polar residues. Positions 1064–1092 (QQQQQHHQAYQQPTAAQPAATSYSPAPAK) are enriched in low complexity. Positions 1093–1106 (AAPPPPPPAPPAAP) are enriched in pro residues. Positions 1109–1170 (PAEPTYKALY…PAAYLEEVQG (62 aa)) constitute an SH3 domain. The span at 1180–1194 (PTAGGASAGASLAEA) shows a compositional bias: low complexity.

Belongs to the TRAFAC class myosin-kinesin ATPase superfamily. Myosin family. In terms of processing, phosphorylation of the TEDS site (Ser-358) is required for the polarization of the actin cytoskeleton. Phosphorylation probably activates the myosin-I ATPase activity.

It localises to the cytoplasm. The protein resides in the cytoskeleton. The protein localises to the actin patch. Functionally, type-I myosin implicated in the organization of the actin cytoskeleton. Required for proper actin cytoskeleton polarization. At the cell cortex, assembles in patch-like structures together with proteins from the actin-polymerizing machinery and promotes actin assembly. Functions as actin nucleation-promoting factor (NPF) for the Arp2/3 complex. The sequence is that of Myosin-1 (MYO1) from Yarrowia lipolytica (strain CLIB 122 / E 150) (Yeast).